Here is a 354-residue protein sequence, read N- to C-terminus: Erythroferrone (354 aa).

Positions Met1 to Gly28 are cleaved as a signal peptide. Low complexity-rich tracts occupy residues Gly26 to Arg37 and Pro51 to Ala62. Residues Gly26 to Pro123 form a disordered region. Positions Thr69–Asp80 are enriched in basic and acidic residues. The span at Asn94–Lys107 shows a compositional bias: basic residues. 6 positions are modified to hydroxyproline: Pro111, Pro113, Pro114, Pro116, Pro117, and Pro119. The span at Pro111–Pro123 shows a compositional bias: pro residues. In terms of domain architecture, C1q spans Ala199 to Val354. N-linked (GlcNAc...) asparagine glycosylation is found at Asn243, Asn295, and Asn333.

It belongs to the adipolin/erythroferrone family. Homodimer; disulfide-linked. Forms trimer, hexamers and higher molecular weight oligomers. May form heteromeric complexes with C1QTNF2 and C1QTNF12 and, to a lesser extent, with C1QTNF5 and C1QTNF10. Interacts with BMP5 and BMP7; the interaction inhibits BMP-induced transcription of HAMP. Interacts with BMP6; the interaction inhibits BMP-induced transcription of HAMP. Interacts with BMP2. Interacts with heterodimers composed of BMP2 and BMP6 in vitro, the interaction inhibits the heterodimer binding to its receptor BMPR1A /ALK3 and thereby suppresses expression of HAMP. N-glycosylated; required for secretion of the mature protein.

The protein localises to the secreted. In terms of biological role, iron-regulatory hormone that acts as an erythroid regulator after hemorrhage: produced by erythroblasts following blood loss and mediates suppression of hepcidin (HAMP) expression in the liver, thereby promoting increased iron absorption and mobilization from stores. Promotes lipid uptake into adipocytes and hepatocytes via transcriptional up-regulation of genes involved in fatty acid uptake. Inhibits apoptosis and inflammatory response in cardiomyocytes via promotion of sphingosine-1-phosphate (S1P) and cAMP-dependent activation of AKT signaling. Inhibits autophagy induced by nutrient deficiency in hepatocytes via promoting the phosphorylation of IRS1, AKT, and MTOR, and thereby subsequent activation of the AKT-MTOR signaling pathway. Negatively regulates the differentiation of osteoblasts, potentially via sequestering BMP2, and thereby inhibits the activation of SMAD signaling. The reduction in BMP2 signaling in osteoblasts also results in an increase in expression of the osteoclastogenesis-promoting factors TNFSF11/RANKL and SOST, thereby indirectly promotes bone resorption. This Homo sapiens (Human) protein is Erythroferrone.